The chain runs to 154 residues: 3-hydroxyacyl-[acyl-carrier-protein] dehydratase FabZ (154 aa).

Histidine 55 is an active-site residue.

This sequence belongs to the thioester dehydratase family. FabZ subfamily.

The protein localises to the cytoplasm. The catalysed reaction is a (3R)-hydroxyacyl-[ACP] = a (2E)-enoyl-[ACP] + H2O. In terms of biological role, involved in unsaturated fatty acids biosynthesis. Catalyzes the dehydration of short chain beta-hydroxyacyl-ACPs and long chain saturated and unsaturated beta-hydroxyacyl-ACPs. The sequence is that of 3-hydroxyacyl-[acyl-carrier-protein] dehydratase FabZ from Nitratidesulfovibrio vulgaris (strain ATCC 29579 / DSM 644 / CCUG 34227 / NCIMB 8303 / VKM B-1760 / Hildenborough) (Desulfovibrio vulgaris).